Consider the following 154-residue polypeptide: SsrA-binding protein (154 aa).

Residues 132–154 (KRESIKKRQDKRDMERALKRGAE) are disordered.

The protein belongs to the SmpB family.

The protein localises to the cytoplasm. Its function is as follows. Required for rescue of stalled ribosomes mediated by trans-translation. Binds to transfer-messenger RNA (tmRNA), required for stable association of tmRNA with ribosomes. tmRNA and SmpB together mimic tRNA shape, replacing the anticodon stem-loop with SmpB. tmRNA is encoded by the ssrA gene; the 2 termini fold to resemble tRNA(Ala) and it encodes a 'tag peptide', a short internal open reading frame. During trans-translation Ala-aminoacylated tmRNA acts like a tRNA, entering the A-site of stalled ribosomes, displacing the stalled mRNA. The ribosome then switches to translate the ORF on the tmRNA; the nascent peptide is terminated with the 'tag peptide' encoded by the tmRNA and targeted for degradation. The ribosome is freed to recommence translation, which seems to be the essential function of trans-translation. The protein is SsrA-binding protein of Acaryochloris marina (strain MBIC 11017).